The following is a 1293-amino-acid chain: Enterobactin synthase component F (1293 aa).

The elongation/condensation stretch occupies residues 1–301; sequence MSQHLPLVAA…NVLPLGIHIA (301 aa). The segment at 482–887 is adenylatione; it reads SYREMREQVV…ALPDVEQAVT (406 aa). One can recognise a Carrier domain in the interval 971–1046; it reads APKAGSETII…KLATIIDAEE (76 aa). S1006 bears the O-(pantetheine 4'-phosphoryl)serine mark. The tract at residues 1066–1293 is thioesterase; that stretch reads PTLFCFHPAS…GPIIRATLNR (228 aa). H1271 serves as the catalytic Proton acceptor; for thioesterase activity.

The protein belongs to the ATP-dependent AMP-binding enzyme family. EntF subfamily. Proteins EntB, EntD, EntE and EntF are the component of the enterobactin synthase. Components probably do not form a stable complex. EntF acts as a catalytic monomer. Interacts with the MbtH-like protein YbdZ. YbdZ binds to the adenylation domain, but does not alter the structure of the domain. The cofactor is pantetheine 4'-phosphate. Post-translationally, 4'-phosphopantetheine is transferred from CoA to a specific serine of apo-EntF by EntD. Holo-EntF so formed is then acylated with seryl-AMP.

It is found in the cytoplasm. The enzyme catalyses 3 2,3-dihydroxybenzoate + 3 L-serine + 6 ATP = enterobactin + 6 AMP + 6 diphosphate + 4 H(+). It carries out the reaction holo-[peptidyl-carrier protein] + L-serine + ATP = L-seryl-[peptidyl-carrier protein] + AMP + diphosphate. The protein operates within siderophore biosynthesis; enterobactin biosynthesis. With respect to regulation, adenylation activity is increased in the presence of the MbtH-like protein YbdZ. In terms of biological role, involved in the biosynthesis of the siderophore enterobactin (enterochelin), which is a macrocyclic trimeric lactone of N-(2,3-dihydroxybenzoyl)-serine. EntF catalyzes the activation of L-serine via ATP-dependent PPi exchange reaction to form seryladenylate. Activated L-serine is loaded onto the peptidyl carrier domain via a thioester linkage to the phosphopanthetheine moiety, forming seryl-S-Ppant-EntF. EntF acts then as the sole catalyst for the formation of the three amide and three ester linkages found in enterobactin, using seryladenylate and 2,3-dihydroxybenzoate-S-Ppant-EntB (DHB-S-Ppant-EntB) as substrates, via the formation of a DHB-Ser-S-Ppant-EntF intermediate. This Escherichia coli (strain K12) protein is Enterobactin synthase component F.